The chain runs to 242 residues: Protein odd-skipped-related 1 (242 aa).

C2H2-type zinc fingers lie at residues 128-150, 156-178, and 184-207; these read FICKYCARHFTKSYNLMIHERTH, FHCETCGKSFRRQDHLRDHKYIH, and HKCEICGKGFCQLRTLNVHRSCHH.

This sequence belongs to the Odd C2H2-type zinc-finger protein family.

It is found in the nucleus. In terms of biological role, may function as transcription regulator. Essential for larval development. Required for morphogenesis and function of the digestive tract. This Caenorhabditis elegans protein is Protein odd-skipped-related 1.